The chain runs to 679 residues: Protein hook (679 aa).

Residues 1 to 155 form an interaction with microtubules region; sequence MSAPKNEMYY…NIMRALQELE (155 aa). The 118-residue stretch at 6–123 folds into the Calponin-homology (CH) domain; the sequence is NEMYYSLLEW…RLLQLVLGCA (118 aa). 2 coiled-coil regions span residues 135 to 437 and 480 to 574; these read EIMC…LKCG and QTAL…QEIL.

The protein belongs to the hook family. As to quaternary structure, homodimer. Interacts with microtubules via its N-terminus.

Its subcellular location is the cytoplasm. The protein resides in the cytoskeleton. The protein localises to the endosome. It is found in the synapse. In terms of biological role, involved in endocytic trafficking by stabilizing organelles of the endocytic pathway. Probably acts as a cytoskeletal linker protein required to tether endosome vesicles to the cytoskeleton. Involved in modulation of endocytosis at stages required for down-regulation of membrane proteins that control synapse size. Not involved in synaptic vesicle recycling. Required in R7 cells for boss endocytosis into multivesicular bodies (MVBs). Has a role in regulating adult longevity. In Drosophila melanogaster (Fruit fly), this protein is Protein hook.